The sequence spans 363 residues: Aminomethyltransferase (363 aa).

The protein belongs to the GcvT family. As to quaternary structure, the glycine cleavage system is composed of four proteins: P, T, L and H.

It catalyses the reaction N(6)-[(R)-S(8)-aminomethyldihydrolipoyl]-L-lysyl-[protein] + (6S)-5,6,7,8-tetrahydrofolate = N(6)-[(R)-dihydrolipoyl]-L-lysyl-[protein] + (6R)-5,10-methylene-5,6,7,8-tetrahydrofolate + NH4(+). Functionally, the glycine cleavage system catalyzes the degradation of glycine. This chain is Aminomethyltransferase, found in Staphylococcus epidermidis (strain ATCC 35984 / DSM 28319 / BCRC 17069 / CCUG 31568 / BM 3577 / RP62A).